The following is a 417-amino-acid chain: Serine hydroxymethyltransferase (417 aa).

(6S)-5,6,7,8-tetrahydrofolate contacts are provided by residues Leu-121 and 125–127; that span reads GHL. Lys-229 is modified (N6-(pyridoxal phosphate)lysine). 355-357 serves as a coordination point for (6S)-5,6,7,8-tetrahydrofolate; sequence SPF.

Belongs to the SHMT family. As to quaternary structure, homodimer. Requires pyridoxal 5'-phosphate as cofactor.

It is found in the cytoplasm. It catalyses the reaction (6R)-5,10-methylene-5,6,7,8-tetrahydrofolate + glycine + H2O = (6S)-5,6,7,8-tetrahydrofolate + L-serine. Its pathway is one-carbon metabolism; tetrahydrofolate interconversion. It participates in amino-acid biosynthesis; glycine biosynthesis; glycine from L-serine: step 1/1. In terms of biological role, catalyzes the reversible interconversion of serine and glycine with tetrahydrofolate (THF) serving as the one-carbon carrier. This reaction serves as the major source of one-carbon groups required for the biosynthesis of purines, thymidylate, methionine, and other important biomolecules. Also exhibits THF-independent aldolase activity toward beta-hydroxyamino acids, producing glycine and aldehydes, via a retro-aldol mechanism. In Shewanella baltica (strain OS185), this protein is Serine hydroxymethyltransferase.